Here is a 676-residue protein sequence, read N- to C-terminus: Translation initiation factor IF-2, mitochondrial (676 aa).

One can recognise a tr-type G domain in the interval 143–326 (KRAPVVTIMG…MDIRAENSPK (184 aa)). The G1 stretch occupies residues 152–159 (GHVDHGKT). 152–159 (GHVDHGKT) is a GTP binding site. Residues 177–181 (GITQH) are G2. Residues 200 to 203 (DTPG) and 254 to 257 (TKID) each bind GTP. A G3 region spans residues 200 to 203 (DTPG). The interval 254 to 257 (TKID) is G4. The tract at residues 296–298 (SAK) is G5.

This sequence belongs to the TRAFAC class translation factor GTPase superfamily. Classic translation factor GTPase family. IF-2 subfamily.

The protein resides in the mitochondrion. Functionally, one of the essential components for the initiation of protein synthesis. Protects formylmethionyl-tRNA from spontaneous hydrolysis and promotes its binding to the 30S ribosomal subunits. Also involved in the hydrolysis of GTP during the formation of the 70S ribosomal complex. This Saccharomyces cerevisiae (strain ATCC 204508 / S288c) (Baker's yeast) protein is Translation initiation factor IF-2, mitochondrial (IFM1).